The following is a 215-amino-acid chain: Octanoyltransferase (215 aa).

One can recognise a BPL/LPL catalytic domain in the interval Pro31–Glu206. Substrate contacts are provided by residues Arg70–His77, Ser137–Gly139, and Gly150–Ala152. Cys168 serves as the catalytic Acyl-thioester intermediate.

Belongs to the LipB family.

It localises to the cytoplasm. It carries out the reaction octanoyl-[ACP] + L-lysyl-[protein] = N(6)-octanoyl-L-lysyl-[protein] + holo-[ACP] + H(+). It participates in protein modification; protein lipoylation via endogenous pathway; protein N(6)-(lipoyl)lysine from octanoyl-[acyl-carrier-protein]: step 1/2. In terms of biological role, catalyzes the transfer of endogenously produced octanoic acid from octanoyl-acyl-carrier-protein onto the lipoyl domains of lipoate-dependent enzymes. Lipoyl-ACP can also act as a substrate although octanoyl-ACP is likely to be the physiological substrate. The protein is Octanoyltransferase of Pseudomonas entomophila (strain L48).